Reading from the N-terminus, the 421-residue chain is Putative nickel insertion protein (421 aa).

This sequence belongs to the LarC family.

This Gloeobacter violaceus (strain ATCC 29082 / PCC 7421) protein is Putative nickel insertion protein.